Reading from the N-terminus, the 416-residue chain is Trehalose synthase (416 aa).

The protein belongs to the glycosyltransferase group 1 family. Glycosyltransferase 4 subfamily. In terms of assembly, homodimer. Mg(2+) serves as cofactor.

It carries out the reaction an NDP-alpha-D-glucose + D-glucose = alpha,alpha-trehalose + a ribonucleoside 5'-diphosphate + H(+). Inhibited by 20 mM Fe(3+) and Mn(2+). Partially inhibited by Zn(2+) and Ni(2+). Activity is slightly enhanced by 2 mM Fe (3+), Mn (2+), Ca(2+) or Li(+) and by 20 mM Mg(2+), Ca(2+) or Li(+). Synthesizes trehalose from ADP-glucose and glucose. The reaction is reversible, the equilibrium strongly favors trehalose synthesis. This is Trehalose synthase from Rubrobacter xylanophilus (strain DSM 9941 / JCM 11954 / NBRC 16129 / PRD-1).